A 136-amino-acid polypeptide reads, in one-letter code: Large ribosomal subunit protein uL16 (136 aa).

It belongs to the universal ribosomal protein uL16 family. As to quaternary structure, part of the 50S ribosomal subunit.

Its function is as follows. Binds 23S rRNA and is also seen to make contacts with the A and possibly P site tRNAs. The sequence is that of Large ribosomal subunit protein uL16 from Glaesserella parasuis serovar 5 (strain SH0165) (Haemophilus parasuis).